A 452-amino-acid polypeptide reads, in one-letter code: Coproporphyrinogen III oxidase (452 aa).

FAD-binding positions include 10-15, 36-37, 58-61, Val-242, Trp-390, and 426-428; these read GGGISG, EP, GAEA, and IGV.

Belongs to the protoporphyrinogen/coproporphyrinogen oxidase family. Coproporphyrinogen III oxidase subfamily. FAD serves as cofactor.

The protein resides in the cytoplasm. It carries out the reaction coproporphyrinogen III + 3 O2 = coproporphyrin III + 3 H2O2. Its pathway is porphyrin-containing compound metabolism; protoheme biosynthesis. Functionally, involved in coproporphyrin-dependent heme b biosynthesis. Catalyzes the oxidation of coproporphyrinogen III to coproporphyrin III. The chain is Coproporphyrinogen III oxidase from Mycobacterium bovis (strain ATCC BAA-935 / AF2122/97).